The primary structure comprises 208 residues: Elongation factor Ts, chloroplastic (208 aa).

Belongs to the EF-Ts family.

The protein resides in the plastid. It localises to the chloroplast. Associates with the EF-Tu.GDP complex and induces the exchange of GDP to GTP. It remains bound to the aminoacyl-tRNA.EF-Tu.GTP complex up to the GTP hydrolysis stage on the ribosome. This chain is Elongation factor Ts, chloroplastic (tsf), found in Cyanidium caldarium (Red alga).